The chain runs to 243 residues: Probable transcriptional regulatory protein BDU_30 (243 aa).

This sequence belongs to the TACO1 family.

The protein localises to the cytoplasm. In Borrelia duttonii (strain Ly), this protein is Probable transcriptional regulatory protein BDU_30.